The primary structure comprises 352 residues: MVYQVSSPTYDIDYYTSEPCQKINVKQIAARLLPPLYSLVFIFGFVGNILVVLILINCKRLKSMTDIYLLNLAISDLLFLLTIPFWAHYAAAQWDFGNTMCQLLTGLYLIGFFSGIFFIILLTIDRYLAIVHAVFALKARTVTFGLVTSVITWVVAVFASLPGIIFTRSQREGLHYTCSSHFPSSQYQFWKNFQTLKIVILGLVLPLLVMVICYSGILKTLLRCRNEKKRHRAVRLIFTIMIVYFLFWAPYNIVLLLNTFQEFFGLNNCSSSNRLDQAMQVTETLGMTHCCINPIIYAFVGEKFRNYLLVFFQKHLAKRFCKCCSISQQEAPERASSVYTRSTGEQETTVGL.

The Extracellular portion of the chain corresponds to 1-30 (MVYQVSSPTYDIDYYTSEPCQKINVKQIAA). Sulfotyrosine is present on Y3. Residues S6 and S7 are each glycosylated (O-linked (GalNAc...) serine). Sulfotyrosine occurs at positions 10, 14, and 15. 2 cysteine pairs are disulfide-bonded: C20–C269 and C101–C178. The helical transmembrane segment at 31–58 (RLLPPLYSLVFIFGFVGNILVVLILINC) threads the bilayer. Residues 59–68 (KRLKSMTDIY) lie on the Cytoplasmic side of the membrane. Residues 69–89 (LLNLAISDLLFLLTIPFWAHY) traverse the membrane as a helical segment. At 90 to 102 (AAAQWDFGNTMCQ) the chain is on the extracellular side. A helical membrane pass occupies residues 103–124 (LLTGLYLIGFFSGIFFIILLTI). The Cytoplasmic portion of the chain corresponds to 125–141 (DRYLAIVHAVFALKART). A helical transmembrane segment spans residues 142–166 (VTFGLVTSVITWVVAVFASLPGIIF). Over 167-198 (TRSQREGLHYTCSSHFPSSQYQFWKNFQTLKI) the chain is Extracellular. A helical membrane pass occupies residues 199 to 218 (VILGLVLPLLVMVICYSGIL). Residues 219–235 (KTLLRCRNEKKRHRAVR) lie on the Cytoplasmic side of the membrane. A helical transmembrane segment spans residues 236 to 260 (LIFTIMIVYFLFWAPYNIVLLLNTF). Residues 261–277 (QEFFGLNNCSSSNRLDQ) lie on the Extracellular side of the membrane. The helical transmembrane segment at 278-301 (AMQVTETLGMTHCCINPIIYAFVG) threads the bilayer. Residues 302 to 352 (EKFRNYLLVFFQKHLAKRFCKCCSISQQEAPERASSVYTRSTGEQETTVGL) are Cytoplasmic-facing. S-palmitoyl cysteine attachment occurs at residues C321, C323, and C324. 3 positions are modified to phosphoserine; by BARK1: S336, S337, and S342.

Belongs to the G-protein coupled receptor 1 family. Interacts with PRAF2. Efficient ligand binding to CCL3/MIP-1alpha and CCL4/MIP-1beta requires sulfation, O-glycosylation and sialic acid modifications. Glycosylation on Ser-6 is required for efficient binding of CCL4. Interacts with GRK2. Interacts with ARRB1 and ARRB2. Interacts with CNIH4. Interacts with S100A4; this interaction stimulates T-lymphocyte chemotaxis. Post-translationally, sulfated on at least 2 of the N-terminal tyrosines. Sulfation is required for efficient binding of the chemokines, CCL3 and CCL4. In terms of processing, palmitoylation in the C-terminal is important for cell surface expression. Phosphorylation on serine residues in the C-terminal is stimulated by binding CC chemokines especially by APO-RANTES. Post-translationally, O-glycosylated, but not N-glycosylated. Ser-6 appears to be the major site even if Ser-7 may be also O-glycosylated. Also sialylated glycans present which contribute to chemokine binding. Thr-16 and Ser-17 may also be glycosylated and, if so, with small moieties such as a T-antigen.

It is found in the cell membrane. Receptor for a number of inflammatory CC-chemokines including CCL3/MIP-1-alpha, CCL4/MIP-1-beta and RANTES and subsequently transduces a signal by increasing the intracellular calcium ion level. May play a role in the control of granulocytic lineage proliferation or differentiation. Participates in T-lymphocyte migration to the infection site by acting as a chemotactic receptor. The chain is C-C chemokine receptor type 5 (CCR5) from Allochrocebus solatus (Sun-tailed monkey).